Here is a 291-residue protein sequence, read N- to C-terminus: Porphobilinogen deaminase (291 aa).

C238 is modified (S-(dipyrrolylmethanemethyl)cysteine).

The protein belongs to the HMBS family. In terms of assembly, monomer. The cofactor is dipyrromethane.

It carries out the reaction 4 porphobilinogen + H2O = hydroxymethylbilane + 4 NH4(+). Its pathway is porphyrin-containing compound metabolism; protoporphyrin-IX biosynthesis; coproporphyrinogen-III from 5-aminolevulinate: step 2/4. Its function is as follows. Tetrapolymerization of the monopyrrole PBG into the hydroxymethylbilane pre-uroporphyrinogen in several discrete steps. The chain is Porphobilinogen deaminase from Clostridium beijerinckii (strain ATCC 51743 / NCIMB 8052) (Clostridium acetobutylicum).